Reading from the N-terminus, the 334-residue chain is Proline-serine-threonine phosphatase-interacting protein 2 (334 aa).

Residues 4 to 264 (SLFKGNFWSA…SLEMCSIQRD (261 aa)) enclose the F-BAR domain. Residues 66 to 166 (GQSEINTLKR…AVSRSANLVN (101 aa)) are a coiled coil. The tract at residues 295–322 (VPAGKATGPNLARRGPLPIPKSSPDDPN) is disordered. Residues Tyr-323 and Tyr-329 each carry the phosphotyrosine modification.

In terms of processing, phosphorylated on tyrosine.

It is found in the cytoplasm. Its subcellular location is the membrane. Its function is as follows. Binds to F-actin. May be involved in regulation of the actin cytoskeleton. This is Proline-serine-threonine phosphatase-interacting protein 2 (PSTPIP2) from Homo sapiens (Human).